We begin with the raw amino-acid sequence, 219 residues long: MKHILKTVDHTILKATTTWEDIKILCDEAVDMSVASVCIPPSYVKRASEYLKGKIKICTVIGFPLGYQTTATKVFEAKDAIENGADEVDMVVNISDIKNKDYDNIGKEIKEIKKAIGDKVLKVIIETCYLDEDEKIKMCEIVTMSGSDFIKTSTGMGTGGATLEDIKLMKEHVGKNVKIKAAGGVKSISDAEKFIEAGAERLGTSSICKILKNEDTTDY.

Aspartate 89 (proton donor/acceptor) is an active-site residue. Lysine 151 serves as the catalytic Schiff-base intermediate with acetaldehyde. Residue lysine 180 is the Proton donor/acceptor of the active site.

Belongs to the DeoC/FbaB aldolase family. DeoC type 1 subfamily.

The protein resides in the cytoplasm. The catalysed reaction is 2-deoxy-D-ribose 5-phosphate = D-glyceraldehyde 3-phosphate + acetaldehyde. Its pathway is carbohydrate degradation; 2-deoxy-D-ribose 1-phosphate degradation; D-glyceraldehyde 3-phosphate and acetaldehyde from 2-deoxy-alpha-D-ribose 1-phosphate: step 2/2. Catalyzes a reversible aldol reaction between acetaldehyde and D-glyceraldehyde 3-phosphate to generate 2-deoxy-D-ribose 5-phosphate. The protein is Deoxyribose-phosphate aldolase of Clostridioides difficile (strain 630) (Peptoclostridium difficile).